The sequence spans 389 residues: Oxysterol-binding protein 1 (389 aa).

Coiled-coil stretches lie at residues 1–31 (MGKK…NKPA) and 340–371 (KDDV…DEWK). The interval 1-43 (MGKKDKNVSVEEEVDEAEIEKLAAENANKPAPQLTKEDLDAMD) is disordered.

The protein belongs to the OSBP family. Interacts with dstC.

It localises to the cytoplasm. In terms of biological role, may play a role in the regulation of the slug-fruiting body switch. This Dictyostelium discoideum (Social amoeba) protein is Oxysterol-binding protein 1 (osbA).